Reading from the N-terminus, the 487-residue chain is Glutamate--tRNA ligase (487 aa).

The 'HIGH' region motif lies at 11–21; sequence PSPTGYPHLGN. The Zn(2+) site is built by Cys108, Cys110, Cys135, and Asp137. The 'KMSKS' region signature appears at 245 to 249; the sequence is KLSKR. Position 248 (Lys248) interacts with ATP.

This sequence belongs to the class-I aminoacyl-tRNA synthetase family. Glutamate--tRNA ligase type 1 subfamily. Monomer. The cofactor is Zn(2+).

The protein localises to the cytoplasm. The enzyme catalyses tRNA(Glu) + L-glutamate + ATP = L-glutamyl-tRNA(Glu) + AMP + diphosphate. Functionally, catalyzes the attachment of glutamate to tRNA(Glu) in a two-step reaction: glutamate is first activated by ATP to form Glu-AMP and then transferred to the acceptor end of tRNA(Glu). The polypeptide is Glutamate--tRNA ligase (Dehalococcoides mccartyi (strain ATCC BAA-2100 / JCM 16839 / KCTC 5957 / BAV1)).